A 577-amino-acid polypeptide reads, in one-letter code: Monooxygenase PC-14 (577 aa).

The protein belongs to the FMO family. FAD serves as cofactor.

The protein operates within secondary metabolite biosynthesis. In terms of biological role, monooxygenase; part of the gene cluster that mediates the biosynthesis of the indole diterpenes penitrems. The geranylgeranyl diphosphate (GGPP) synthase penG catalyzes the first step in penitrem biosynthesis via conversion of farnesyl pyrophosphate and isopentyl pyrophosphate into geranylgeranyl pyrophosphate (GGPP). Condensation of indole-3-glycerol phosphate with GGPP by the prenyl transferase penC then forms 3-geranylgeranylindole (3-GGI). Epoxidation by the FAD-dependent monooxygenase penM leads to a epoxidized-GGI that is substrate of the terpene cyclase penB for cyclization to yield paspaline. Paspaline is subsequently converted to 13-desoxypaxilline by the cytochrome P450 monooxygenase penP, the latter being then converted to paxilline by the cytochrome P450 monooxygenase penQ. Paxilline is converted to beta-paxitriol via C-10 ketoreduction by the short-chain dehydrogenase PC-15 which can be monoprenylated at the C-20 by the indole diterpene prenyltransferase penD. A two-step elimination (acetylation and elimination) process performed by the O-acetyltransferase PC-16 and the P.simplicissimum ptmI-ortholog not yet identified in P.crustosum, leads to the production of the prenylated form of penijanthine. The FAD-linked oxidoreductase ptmO then converts the prenylated form of penijanthine into PC-M5 which is in turn transformed into PC-M4 by the aromatic dimethylallyltransferase PC-22. A series of oxidation steps involving 4 cytochrome P450 monooxygenases (PC-21, PC-05, PC-23, PC-20) and a FAD-dependent monooxygenase (PC-14) are required for the transformation of PC-M4 to penitrems A and E. Synthesis of these final products is proposed to proceed via penitrems D and C (PC-21, PC-05, PC-14) and penitrems B and F (PC-21, PC-05, PC-14, PC-23). In Penicillium crustosum (Blue mold fungus), this protein is Monooxygenase PC-14.